The chain runs to 392 residues: Phosphoglycerate kinase (392 aa).

Substrate contacts are provided by residues 21–23 (DLN), R36, 59–62 (HRGR), R113, and R146. ATP is bound by residues K197, E314, and 340–343 (GGDT).

The protein belongs to the phosphoglycerate kinase family. As to quaternary structure, monomer.

It localises to the cytoplasm. The enzyme catalyses (2R)-3-phosphoglycerate + ATP = (2R)-3-phospho-glyceroyl phosphate + ADP. It participates in carbohydrate degradation; glycolysis; pyruvate from D-glyceraldehyde 3-phosphate: step 2/5. The chain is Phosphoglycerate kinase from Vesicomyosocius okutanii subsp. Calyptogena okutanii (strain HA).